Consider the following 372-residue polypeptide: 4-hydroxy-3-methylbut-2-en-1-yl diphosphate synthase (flavodoxin) (372 aa).

[4Fe-4S] cluster-binding residues include Cys270, Cys273, Cys305, and Glu312.

The protein belongs to the IspG family. It depends on [4Fe-4S] cluster as a cofactor.

The enzyme catalyses (2E)-4-hydroxy-3-methylbut-2-enyl diphosphate + oxidized [flavodoxin] + H2O + 2 H(+) = 2-C-methyl-D-erythritol 2,4-cyclic diphosphate + reduced [flavodoxin]. It participates in isoprenoid biosynthesis; isopentenyl diphosphate biosynthesis via DXP pathway; isopentenyl diphosphate from 1-deoxy-D-xylulose 5-phosphate: step 5/6. In terms of biological role, converts 2C-methyl-D-erythritol 2,4-cyclodiphosphate (ME-2,4cPP) into 1-hydroxy-2-methyl-2-(E)-butenyl 4-diphosphate. In Salmonella paratyphi B (strain ATCC BAA-1250 / SPB7), this protein is 4-hydroxy-3-methylbut-2-en-1-yl diphosphate synthase (flavodoxin).